Reading from the N-terminus, the 333-residue chain is Phosphate acyltransferase (333 aa).

This sequence belongs to the PlsX family. Homodimer. Probably interacts with PlsY.

The protein localises to the cytoplasm. It carries out the reaction a fatty acyl-[ACP] + phosphate = an acyl phosphate + holo-[ACP]. It functions in the pathway lipid metabolism; phospholipid metabolism. Its function is as follows. Catalyzes the reversible formation of acyl-phosphate (acyl-PO(4)) from acyl-[acyl-carrier-protein] (acyl-ACP). This enzyme utilizes acyl-ACP as fatty acyl donor, but not acyl-CoA. The polypeptide is Phosphate acyltransferase (Desulforamulus reducens (strain ATCC BAA-1160 / DSM 100696 / MI-1) (Desulfotomaculum reducens)).